A 304-amino-acid polypeptide reads, in one-letter code: Glycine--tRNA ligase alpha subunit (304 aa).

Belongs to the class-II aminoacyl-tRNA synthetase family. As to quaternary structure, tetramer of two alpha and two beta subunits.

It localises to the cytoplasm. The enzyme catalyses tRNA(Gly) + glycine + ATP = glycyl-tRNA(Gly) + AMP + diphosphate. This chain is Glycine--tRNA ligase alpha subunit, found in Pectobacterium atrosepticum (strain SCRI 1043 / ATCC BAA-672) (Erwinia carotovora subsp. atroseptica).